The sequence spans 257 residues: Zinc-finger homeodomain protein 6 (257 aa).

Positions 1-35 (MEFRGHDEPVDEMGVAYGRTPPSSSSSPAASASAG) are disordered. Over residues 21 to 35 (PPSSSSSPAASASAG) the composition is skewed to low complexity. The segment at 45–93 (YHECLRNHAAAMGGHVVDGCGEFMPMPGDAADALKCAACGCHRSFHRKD) adopts a ZF-HD dimerization-type; degenerate zinc-finger fold. Positions 106-125 (PSPPTPRVPLLMPPPQPQPH) are enriched in pro residues. 2 disordered regions span residues 106–182 (PSPP…TKFT) and 228–257 (NNKS…QQQQ). A compositionally biased stretch (low complexity) spans 141–155 (YHHTPSGSGGTTTES). Residues 174–237 (RKRFRTKFTP…NNKSSIGSSS (64 aa)) constitute a DNA-binding region (homeobox). Positions 242-257 (RRQPQEQQSQQQQQQQ) are enriched in low complexity.

In terms of assembly, homo- and heterodimer with other ZFHD proteins.

The protein resides in the nucleus. Its function is as follows. Putative transcription factor. The polypeptide is Zinc-finger homeodomain protein 6 (ZHD6) (Oryza sativa subsp. indica (Rice)).